A 396-amino-acid polypeptide reads, in one-letter code: Phosphoglycerate kinase (396 aa).

Residues Asp21–Asn23, Arg36, His59–Lys62, Arg119, and Arg156 each bind substrate. Residues Lys206, Glu325, and Gly352 to Ser355 each bind ATP.

Belongs to the phosphoglycerate kinase family. Monomer.

It localises to the cytoplasm. The enzyme catalyses (2R)-3-phosphoglycerate + ATP = (2R)-3-phospho-glyceroyl phosphate + ADP. The protein operates within carbohydrate degradation; glycolysis; pyruvate from D-glyceraldehyde 3-phosphate: step 2/5. In Staphylococcus saprophyticus subsp. saprophyticus (strain ATCC 15305 / DSM 20229 / NCIMB 8711 / NCTC 7292 / S-41), this protein is Phosphoglycerate kinase.